The chain runs to 368 residues: UPF0284 protein Cyan7425_0342 (368 aa).

Belongs to the UPF0284 family.

The chain is UPF0284 protein Cyan7425_0342 from Cyanothece sp. (strain PCC 7425 / ATCC 29141).